Here is a 187-residue protein sequence, read N- to C-terminus: Large ribosomal subunit protein uL5 (187 aa).

This sequence belongs to the universal ribosomal protein uL5 family. As to quaternary structure, part of the 50S ribosomal subunit; part of the 5S rRNA/L5/L18/L25 subcomplex. Contacts the 5S rRNA and the P site tRNA. Forms a bridge to the 30S subunit in the 70S ribosome.

Its function is as follows. This is one of the proteins that bind and probably mediate the attachment of the 5S RNA into the large ribosomal subunit, where it forms part of the central protuberance. In the 70S ribosome it contacts protein S13 of the 30S subunit (bridge B1b), connecting the 2 subunits; this bridge is implicated in subunit movement. Contacts the P site tRNA; the 5S rRNA and some of its associated proteins might help stabilize positioning of ribosome-bound tRNAs. The protein is Large ribosomal subunit protein uL5 of Corynebacterium diphtheriae (strain ATCC 700971 / NCTC 13129 / Biotype gravis).